We begin with the raw amino-acid sequence, 462 residues long: MGKTLFDKLWNRHVIYGKEGEPQLLYVDLHLIHEVTSPQAFEGLRMENRPLRRPDKTFATMDHNVPTEDIFNIQDLVAKKQIEALQTNCEEFGVTLADMGSDRQGIVHMVGPETGLTQPGKVIVCGDSHTATHGAFGAIGFGIGSSEVEHVFATQTIWQQKPKSMGIEINGKLPKGVYAKDIILHLIATYGVAFGTGYAVEYYGETIRNMSMEERMTICNMAIEGGAKMGMMAPDETTFEYVRGREYAPADMEKAIRDWKTLQTDPDAEYDLHIEMDASILEPYVTWGTNPEMGVPFSKAFPEIKDMNYERAYEYMGLKPGQTAEEIELGYVFIGSCTNARLSDLEEAARIVKGNKVKNNIRALVVPGSRQVRNAAESIGLDKIFIEAGFEWREPGCSMCLGMNPDQVPDGVHCASTSNRNFEGRQGKGARTHLVSPAMAAAAAINGHFIDIRKEAIISGGN.

Residues Cys-337, Cys-397, and Cys-400 each coordinate [4Fe-4S] cluster.

This sequence belongs to the aconitase/IPM isomerase family. LeuC type 1 subfamily. In terms of assembly, heterodimer of LeuC and LeuD. It depends on [4Fe-4S] cluster as a cofactor.

The catalysed reaction is (2R,3S)-3-isopropylmalate = (2S)-2-isopropylmalate. It functions in the pathway amino-acid biosynthesis; L-leucine biosynthesis; L-leucine from 3-methyl-2-oxobutanoate: step 2/4. In terms of biological role, catalyzes the isomerization between 2-isopropylmalate and 3-isopropylmalate, via the formation of 2-isopropylmaleate. In Listeria monocytogenes serotype 4a (strain HCC23), this protein is 3-isopropylmalate dehydratase large subunit.